A 973-amino-acid polypeptide reads, in one-letter code: Ras-related protein Rab-44 (973 aa).

The span at 1–21 shows a compositional bias: basic residues; sequence MEKGKGVSRKGRKLASSRRRQ. Positions 1-42 are disordered; it reads MEKGKGVSRKGRKLASSRRRQAREPADGQDAPVAAEAESWPS. In terms of domain architecture, EF-hand spans 77–111; it reads GGEEPQMIFDWVDVESRGHLSLEEFSSGLKNVFGS. Residues 112 to 140 form a disordered region; sequence SPGTHRLRTKRSLPSQRESVTSTLPVPEE. The span at 123–135 shows a compositional bias: polar residues; sequence SLPSQRESVTSTL. Positions 219 to 310 form a coiled coil; it reads LYKVRQLYEE…ERDLAGQLEE (92 aa). Disordered regions lie at residues 319–368, 421–481, 493–708, and 724–779; these read RGHL…FGNN, FSQE…GSFL, GTVE…GLAV, and EAQP…GKPQ. Over residues 428–440 the composition is skewed to pro residues; that stretch reads DPDPGPRGSPEVP. Residues 445-457 are compositionally biased toward basic and acidic residues; that stretch reads KDGKGVEDPKGQD. Positions 513-524 are enriched in low complexity; the sequence is GLSSSPQSPAGS. Composition is skewed to basic and acidic residues over residues 548–559, 598–608, and 654–663; these read SLEREVMAEDLK, HLARQESHAKG, and SESHGLEARS. The segment covering 665 to 680 has biased composition (polar residues); sequence ESPQQDDPLPNTSQPP. Basic and acidic residues predominate over residues 750–766; the sequence is AESRPEDPRTDLQEAER. Residues 792–799, 840–844, and 898–901 each bind GTP; these read GDSNVGKT, DTAGQ, and NKMD. Residues Cys971 and Cys972 are each lipidated (S-geranylgeranyl cysteine).

Belongs to the small GTPase superfamily. Rab family.

Its subcellular location is the cell membrane. The polypeptide is Ras-related protein Rab-44 (Rab44) (Mus musculus (Mouse)).